The primary structure comprises 280 residues: F-box only protein 27 (280 aa).

Residues 20-67 (VLDLSRLPPELLLLVLSHVPPRTLLMHCRRVCRAWRALVDGQALWLLL) enclose the F-box domain. In terms of domain architecture, FBA spans 101–277 (FCALRPLGRN…VTNSSVIIRV (177 aa)).

As to quaternary structure, part of a SCF (SKP1-cullin-F-box) protein ligase complex. Interacts with SKP1 and CUL1. In terms of tissue distribution, detected in brain, heart and muscle.

In terms of biological role, substrate-recognition component of the SCF (SKP1-CUL1-F-box protein)-type E3 ubiquitin ligase complex. Able to recognize and bind complex-type oligosaccharides. In Mus musculus (Mouse), this protein is F-box only protein 27 (Fbxo27).